The sequence spans 228 residues: Deoxyribose-phosphate aldolase (228 aa).

Asp-93 (proton donor/acceptor) is an active-site residue. Lys-159 functions as the Schiff-base intermediate with acetaldehyde in the catalytic mechanism. The active-site Proton donor/acceptor is the Lys-188.

This sequence belongs to the DeoC/FbaB aldolase family. DeoC type 1 subfamily.

Its subcellular location is the cytoplasm. The enzyme catalyses 2-deoxy-D-ribose 5-phosphate = D-glyceraldehyde 3-phosphate + acetaldehyde. The protein operates within carbohydrate degradation; 2-deoxy-D-ribose 1-phosphate degradation; D-glyceraldehyde 3-phosphate and acetaldehyde from 2-deoxy-alpha-D-ribose 1-phosphate: step 2/2. Functionally, catalyzes a reversible aldol reaction between acetaldehyde and D-glyceraldehyde 3-phosphate to generate 2-deoxy-D-ribose 5-phosphate. The chain is Deoxyribose-phosphate aldolase from Carboxydothermus hydrogenoformans (strain ATCC BAA-161 / DSM 6008 / Z-2901).